A 706-amino-acid polypeptide reads, in one-letter code: Phosphatase and actin regulator 4 (706 aa).

One copy of the RPEL 1 repeat lies at 42–67; sequence EVLERKISMRKPREELVKRGLLVEVP. 4 disordered regions span residues 65–123, 196–380, 385–404, and 459–579; these read EVPE…QPCA, VHPR…HIPV, VPML…QSAS, and LKVP…REEW. Polar residues predominate over residues 106–121; it reads DSTGSRPKSGETTVQP. The segment covering 200–211 has biased composition (basic and acidic residues); sequence HLSEKNSEKYRP. Residues 266–276 are compositionally biased toward polar residues; the sequence is DPSTRQQSSVP. A compositionally biased stretch (pro residues) spans 290–299; sequence KQPPVPPPKP. Composition is skewed to acidic residues over residues 463-476, 508-523, and 531-541; these read DDDD…DESL, QEEE…DTDS, and EDDEEEEEEET. Residues 563–579 are compositionally biased toward basic and acidic residues; sequence GPHDSNPEFPQRSREEW. RPEL repeat units lie at residues 588–613 and 625–650; these read SQLN…QKNE and RRLT…RFNE.

This sequence belongs to the phosphatase and actin regulator family. As to quaternary structure, binds ppp1ca and actin.

It is found in the cytoplasm. Its subcellular location is the cell projection. It localises to the lamellipodium. In terms of biological role, regulator of protein phosphatase 1 (PP1) required for neural tube and optic fissure closure, and enteric neural crest cell (ENCCs) migration during development. Acts as an activator of PP1. During neural tube closure, localizes to the ventral neural tube and activates PP1, leading to down-regulate cell proliferation within cranial neural tissue and the neural retina. Also acts as a regulator of migration of enteric neural crest cells (ENCCs) by activating PP1, leading to repression of the integrin signaling through the rho/rock pathway. The protein is Phosphatase and actin regulator 4 (phactr4) of Xenopus tropicalis (Western clawed frog).